The following is a 34-amino-acid chain: Photosystem II reaction center protein M (34 aa).

The chain crosses the membrane as a helical span at residues I5–L25.

Belongs to the PsbM family. As to quaternary structure, PSII is composed of 1 copy each of membrane proteins PsbA, PsbB, PsbC, PsbD, PsbE, PsbF, PsbH, PsbI, PsbJ, PsbK, PsbL, PsbM, PsbT, PsbX, PsbY, PsbZ, Psb30/Ycf12, at least 3 peripheral proteins of the oxygen-evolving complex and a large number of cofactors. It forms dimeric complexes.

It localises to the plastid membrane. Functionally, one of the components of the core complex of photosystem II (PSII). PSII is a light-driven water:plastoquinone oxidoreductase that uses light energy to abstract electrons from H(2)O, generating O(2) and a proton gradient subsequently used for ATP formation. It consists of a core antenna complex that captures photons, and an electron transfer chain that converts photonic excitation into a charge separation. This subunit is found at the monomer-monomer interface. The polypeptide is Photosystem II reaction center protein M (Cuscuta gronovii (Common dodder)).